Reading from the N-terminus, the 820-residue chain is Phosphoenolpyruvate synthase (820 aa).

The active-site Tele-phosphohistidine intermediate is the histidine 438. The substrate site is built by arginine 539, arginine 587, glutamate 689, glycine 710, serine 711, asparagine 712, and aspartate 713. Glutamate 689 serves as a coordination point for Mg(2+). Aspartate 713 contributes to the Mg(2+) binding site. Cysteine 762 functions as the Proton donor in the catalytic mechanism.

Belongs to the PEP-utilizing enzyme family. Mg(2+) is required as a cofactor.

The catalysed reaction is pyruvate + ATP + H2O = phosphoenolpyruvate + AMP + phosphate + 2 H(+). Its pathway is carbohydrate biosynthesis; gluconeogenesis. Catalyzes the phosphorylation of pyruvate to phosphoenolpyruvate. The protein is Phosphoenolpyruvate synthase (ppsA) of Aeropyrum pernix (strain ATCC 700893 / DSM 11879 / JCM 9820 / NBRC 100138 / K1).